Reading from the N-terminus, the 708-residue chain is Nucleolar protein 11-like (708 aa).

The protein localises to the nucleus. The protein resides in the nucleolus. Functionally, ribosome biogenesis factor. May be required for both optimal rDNA transcription and pre-rRNA processing. This Danio rerio (Zebrafish) protein is Nucleolar protein 11-like (nol11).